The following is a 319-amino-acid chain: MSLNFLEFEQPIAELEAKIEALRDVSRRDESASVDLDKEIEQLEKKSLELTKKIFSNLGAWQVAQLARHPERPYVFDYIEHIFTEFDALAGDRAFADDKALVGGIARLDGRPVMVIGHQKGRGTKEKVFRNFGMPKPEGYRKALRLMKMAERFKMPIITFIDTAGAYPGVGAEERGQSEAIATNLKAMAGLTVPVICNVVGEGGSGGALAIGVGDYVNMLQYSTYSVISPEGCASILWRDSNKAPQAAEAMGLTAGRLKELELIDSIIEEPLGGAHRDLEAISASLKATLVANLAELEALDTDELLERRYQRLMSYGYC.

The 262-residue stretch at 35–296 (DLDKEIEQLE…KATLVANLAE (262 aa)) folds into the CoA carboxyltransferase C-terminal domain.

Belongs to the AccA family. Acetyl-CoA carboxylase is a heterohexamer composed of biotin carboxyl carrier protein (AccB), biotin carboxylase (AccC) and two subunits each of ACCase subunit alpha (AccA) and ACCase subunit beta (AccD).

It localises to the cytoplasm. The catalysed reaction is N(6)-carboxybiotinyl-L-lysyl-[protein] + acetyl-CoA = N(6)-biotinyl-L-lysyl-[protein] + malonyl-CoA. It participates in lipid metabolism; malonyl-CoA biosynthesis; malonyl-CoA from acetyl-CoA: step 1/1. Component of the acetyl coenzyme A carboxylase (ACC) complex. First, biotin carboxylase catalyzes the carboxylation of biotin on its carrier protein (BCCP) and then the CO(2) group is transferred by the carboxyltransferase to acetyl-CoA to form malonyl-CoA. The sequence is that of Acetyl-coenzyme A carboxylase carboxyl transferase subunit alpha from Photobacterium profundum (strain SS9).